The following is a 112-amino-acid chain: 2Fe-2S ferredoxin (112 aa).

In terms of domain architecture, 2Fe-2S ferredoxin-type spans 5-107 (IKVTFIINDG…GIKVRLPSAT (103 aa)). Residues Cys-42, Cys-48, Cys-51, and Cys-88 each coordinate [2Fe-2S] cluster.

The protein belongs to the adrenodoxin/putidaredoxin family. The cofactor is [2Fe-2S] cluster.

Its function is as follows. Ferredoxin are iron-sulfur proteins that transfer electrons in a wide variety of metabolic reactions. The chain is 2Fe-2S ferredoxin (fdxB) from Rickettsia montanensis.